Here is a 261-residue protein sequence, read N- to C-terminus: 5-hmdU DNA kinase (261 aa).

Belongs to the thymidylate kinase family. 5-hmdU DNA kinase subfamily.

The enzyme catalyses 5-hydroxymethyl-dUMP in DNA + ATP = 5-phosphomethyl-dUMP in DNA + ADP + H(+). Its function is as follows. Phosphorylates 5-hydroxymethyluracil (5hmdU) into 5-phosphomethyl-2'-deoxyuridine (5- PmdU) on DNA as a step in the pathway leading to thymidine hypermodifications in the viral genome. As a final result of the pathway of hypermodification, 5-Nalpha-putrescinylthymidine (Nalpha-PutT) substitutes for about 50% of thymidines in the viral DNA. These modifications probably prevent degradation of viral genome by the host restriction-modification antiviral defense system. The chain is 5-hmdU DNA kinase from Delftia phage PhiW-14 (Deftia acidovorans bacteriophage phiW-14).